The chain runs to 155 residues: MNVAFDLTPPSPSQREALIATLNAEEHRILLQHGTEAPFCNRLLDNNQLGTYTCRFCGLPLFHSNAKFKSGTGWPSFFEPYTHAHIRKQHDTSHGMIRTEILCARCNSHLGHLFPDGPPPTYERYCLNSVSLTFIPTGTLLPDQLHRGDNTAYRT.

The 123-residue stretch at Arg-15–Thr-137 folds into the MsrB domain. 4 residues coordinate Zn(2+): Cys-54, Cys-57, Cys-103, and Cys-106. Residue Cys-126 is the Nucleophile of the active site.

It belongs to the MsrB Met sulfoxide reductase family. Zn(2+) serves as cofactor.

The catalysed reaction is L-methionyl-[protein] + [thioredoxin]-disulfide + H2O = L-methionyl-(R)-S-oxide-[protein] + [thioredoxin]-dithiol. In Xylella fastidiosa (strain 9a5c), this protein is Peptide methionine sulfoxide reductase MsrB.